The following is a 352-amino-acid chain: UDP-N-acetylglucosamine--N-acetylmuramyl-(pentapeptide) pyrophosphoryl-undecaprenol N-acetylglucosamine transferase (352 aa).

Residues 14 to 16 (TGG), Asn-124, Arg-164, Ser-185, and Gln-285 contribute to the UDP-N-acetyl-alpha-D-glucosamine site.

The protein belongs to the glycosyltransferase 28 family. MurG subfamily.

The protein resides in the cell inner membrane. It carries out the reaction di-trans,octa-cis-undecaprenyl diphospho-N-acetyl-alpha-D-muramoyl-L-alanyl-D-glutamyl-meso-2,6-diaminopimeloyl-D-alanyl-D-alanine + UDP-N-acetyl-alpha-D-glucosamine = di-trans,octa-cis-undecaprenyl diphospho-[N-acetyl-alpha-D-glucosaminyl-(1-&gt;4)]-N-acetyl-alpha-D-muramoyl-L-alanyl-D-glutamyl-meso-2,6-diaminopimeloyl-D-alanyl-D-alanine + UDP + H(+). The protein operates within cell wall biogenesis; peptidoglycan biosynthesis. Functionally, cell wall formation. Catalyzes the transfer of a GlcNAc subunit on undecaprenyl-pyrophosphoryl-MurNAc-pentapeptide (lipid intermediate I) to form undecaprenyl-pyrophosphoryl-MurNAc-(pentapeptide)GlcNAc (lipid intermediate II). This Chlamydia trachomatis serovar L2 (strain ATCC VR-902B / DSM 19102 / 434/Bu) protein is UDP-N-acetylglucosamine--N-acetylmuramyl-(pentapeptide) pyrophosphoryl-undecaprenol N-acetylglucosamine transferase.